A 463-amino-acid chain; its full sequence is Stress-activated protein kinase jnk-1 (463 aa).

A compositionally biased stretch (polar residues) spans 1–12 (MEERLSTTSSYP). The interval 1 to 23 (MEERLSTTSSYPSHPGRSVEEDH) is disordered. The Protein kinase domain occupies 119 to 412 (YQNLRLIGSG…ISVDDALRHP (294 aa)). Residues 126–131 (GSGAQG) and Lys-148 each bind ATP. Asp-244 acts as the Proton acceptor in catalysis. The residue at position 276 (Thr-276) is a Phosphothreonine. The TXY signature appears at 276-278 (TPY). Tyr-278 is modified (phosphotyrosine).

The protein belongs to the protein kinase superfamily. CMGC Ser/Thr protein kinase family. MAP kinase subfamily. As to quaternary structure, binds to the scaffolding protein, unc-16. Unc-16 also binds other components of the JNK signaling pathway. Interacts with daf-16. The cofactor is Mg(2+). Post-translationally, dually phosphorylated on Thr-276 and Tyr-278, which activates the enzyme. As to expression, expressed in most neurons, including nerve ring, head ganglions, dorsal and ventral nerve cords and tail ganglions. The Thr-276/Tyr-278 phosphorylated form is present in the nerve ring upon heat exposure.

The protein resides in the cytoplasm. It localises to the perikaryon. It is found in the cell projection. The protein localises to the axon. The enzyme catalyses L-seryl-[protein] + ATP = O-phospho-L-seryl-[protein] + ADP + H(+). It carries out the reaction L-threonyl-[protein] + ATP = O-phospho-L-threonyl-[protein] + ADP + H(+). With respect to regulation, activated by threonine and tyrosine phosphorylation by either of the dual specificity kinases, jkk-1 and mek-1. Its function is as follows. Serine/threonine-protein kinase which responds to activation by environmental stress by phosphorylating a number of transcription factors such as daf-16, and thus regulates transcriptional activity. By phosphorylating daf-16, plays a role in daf-16 nuclear translocation in intestinal cells in response to environmental stresses such as heat and oxidative stresses. Downstream of jkk-1, may coordinate locomotion via type-D GABAergic motoneurons and regulates synaptic vesicle transport in conjunction with unc-16. Independently of jkk-1, may regulate some mechanosensory responses, such as response to touch. Independently of jkk-1 and downstream of mek-1, plays a role in resistance to heavy metals, such as Cu(2+) or Cd(2+). Regulates germline cell apoptosis in response to heavy metals such as Cu(2+) and arsenite. Required for dopaminergic CEP neuron degeneration in response to Mn(2+). Required for normal sleep bout quantity and arousal thresholds during the transition from the last larval stage to adulthood in well-fed animals. Downstream of jkk-1 but independently of mek-1, positively regulates lifespan. The chain is Stress-activated protein kinase jnk-1 (jnk-1) from Caenorhabditis elegans.